The sequence spans 221 residues: Iron-sulfur cluster assembly SufBD family protein ycf24 (221 aa).

This sequence belongs to the iron-sulfur cluster assembly SufBD family.

The protein resides in the plastid. It localises to the chloroplast. This Galdieria sulphuraria (Red alga) protein is Iron-sulfur cluster assembly SufBD family protein ycf24 (ycf24).